The sequence spans 1813 residues: Sucrase-isomaltase, intestinal (1813 aa).

At 1-12 (MARKKSSGLKIT) the chain is on the cytoplasmic side. Ser7 carries the post-translational modification Phosphoserine; by PKA. The chain crosses the membrane as a helical; Signal-anchor for type II membrane protein span at residues 13 to 32 (LIVLLAIVTIIAIALVAILP). The Lumenal segment spans residues 33–1813 (TKTPAVELVS…LDEPIEISWT (1781 aa)). Positions 46–95 (GKCPSAENDRLDEKINCIPDQFPTQALCAMQGCCWNPRNESPTPWCSFAN) constitute a P-type 1 domain. 3 cysteine pairs are disulfide-bonded: Cys48–Cys79, Cys62–Cys78, and Cys73–Cys91. The segment at 95–991 (NNHGYEFEKI…DLELNTATAR (897 aa)) is isomaltase. N-linked (GlcNAc...) asparagine glycosylation is present at Asn127. Substrate-binding residues include Asp250 and Asp374. Residue Tyr377 is modified to Sulfotyrosine. Residue Asn388 is glycosylated (N-linked (GlcNAc...) asparagine). Catalysis depends on Asp491, which acts as the Nucleophile; for isomaltase activity. Residues Cys506 and Cys531 are joined by a disulfide bond. Substrate is bound at residue Arg574. Catalysis depends on Asp590, which acts as the For isomaltase activity. Cysteines 621 and 632 form a disulfide. His648 contacts substrate. 4 N-linked (GlcNAc...) asparagine glycosylation sites follow: Asn669, Asn791, Asn896, and Asn911. Positions 917–962 (NQVSLDSEKIDCFPDNNPENKQNCEERGCLWEPNSAAEGPRCYFPK) constitute a P-type 2 domain. The interval 992-1813 (IKMPSNPISV…LDEPIEISWT (822 aa)) is sucrase. N-linked (GlcNAc...) asparagine glycosylation is found at Asn1221 and Asn1289. Tyr1294 bears the Sulfotyrosine mark. N-linked (GlcNAc...) asparagine glycosylation is found at Asn1326 and Asn1340. Sulfotyrosine is present on residues Tyr1368 and Tyr1371. Residue Asp1380 is the Nucleophile; for sucrase activity of the active site. Catalysis depends on Glu1383, which acts as the For sucrase activity. The N-linked (GlcNAc...) asparagine glycan is linked to Asn1432. Asp1486 functions as the Proton donor; for sucrase activity in the catalytic mechanism. Asn1521, Asn1545, Asn1558, Asn1703, and Asn1772 each carry an N-linked (GlcNAc...) asparagine glycan.

This sequence belongs to the glycosyl hydrolase 31 family. In terms of assembly, the resulting sucrase and isomaltase subunits stay associated with one another in a complex by non-covalent linkages. Post-translationally, the precursor is proteolytically cleaved when exposed to pancreatic proteases in the intestinal lumen. Sulfated.

The protein resides in the apical cell membrane. It catalyses the reaction Hydrolysis of sucrose and maltose by an alpha-D-glucosidase-type action.. It carries out the reaction Hydrolysis of (1-&gt;6)-alpha-D-glucosidic linkages in some oligosaccharides produced from starch and glycogen by alpha-amylase, and in isomaltose.. Plays an important role in the final stage of carbohydrate digestion. Isomaltase activity is specific for both alpha-1,4- and alpha-1,6-oligosaccharides. The sequence is that of Sucrase-isomaltase, intestinal (SI) from Suncus murinus (Asian house shrew).